A 427-amino-acid polypeptide reads, in one-letter code: Ceramide Synthase FUM18 (427 aa).

A glycan (N-linked (GlcNAc...) asparagine) is linked at Asn-20. Transmembrane regions (helical) follow at residues Ile-38–Ser-58, Glu-131–Ala-151, Gly-173–Val-193, Tyr-202–Tyr-222, Tyr-250–Val-270, and Val-335–Ile-355. The region spanning Arg-124 to Asp-364 is the TLC domain. Residues Ser-373–Gly-406 are disordered. Asn-387 carries an N-linked (GlcNAc...) asparagine glycan.

The protein belongs to the sphingosine N-acyltransferase family.

It localises to the endoplasmic reticulum membrane. It participates in mycotoxin biosynthesis. Its function is as follows. Ceramide synthase; part of the gene cluster that mediates the biosynthesis of fumonisins B1 (FB1), B2 (FB2), B3 (FB3), and B4 (FB4), which are carcinogenic mycotoxins. Plays a role in self-protection from FB1 toxicity by contributing to ceramide synthesis. The biosynthesis starts with the FUM1-catalyzed carbon chain assembly from one molecule of acetyl-CoA, eight molecules of malonyl-CoA, and two molecules of methionine (in S-adenosyl form). The C18 polyketide chain is released from the enzyme by a nucleophilic attack of a carbanion, which is derived from R-carbon of alanine by decarboxylation, on the carbonyl carbon of polyketide acyl chain. This step is catalyzed by the pyridoxal 5'-phosphate-dependent aminoacyl transferase FUM8. The resultant 3-keto intermediate is then stereospecifically reduced to a 3-hydroxyl product by reductase FUM13. Subsequent oxidations at C-10 by the cytochrome P450 monooxygenase FUM2, C-14 and C-15 by FUM6, FUM12 or FUM15, tricarballylic esterification of the hydroxyl groups on C-14 and C-15 by acyltransferase FUM14, and C-5 hydroxylation by 2-keto-glutarate-dependent dioxygenase FUM3 furnish the biosynthesis of fumonisins. The tricarballylic moieties are most likely derived from the citric acid cycle, and their addition to the carbon backbone may involve FUM7, FUM10, FUM11 and FUM14. This is Ceramide Synthase FUM18 from Gibberella moniliformis (strain M3125 / FGSC 7600) (Maize ear and stalk rot fungus).